Here is a 461-residue protein sequence, read N- to C-terminus: Fumarate hydratase class II (461 aa).

Substrate is bound by residues 97–99 (SGT), 127–130 (HPND), 137–139 (SSN), and threonine 185. Histidine 186 serves as the catalytic Proton donor/acceptor. Serine 316 is a catalytic residue. Residues serine 317 and 322–324 (KVN) each bind substrate.

Belongs to the class-II fumarase/aspartase family. Fumarase subfamily. As to quaternary structure, homotetramer.

Its subcellular location is the cytoplasm. The catalysed reaction is (S)-malate = fumarate + H2O. It functions in the pathway carbohydrate metabolism; tricarboxylic acid cycle; (S)-malate from fumarate: step 1/1. In terms of biological role, involved in the TCA cycle. Catalyzes the stereospecific interconversion of fumarate to L-malate. The chain is Fumarate hydratase class II from Staphylococcus epidermidis (strain ATCC 35984 / DSM 28319 / BCRC 17069 / CCUG 31568 / BM 3577 / RP62A).